The following is a 361-amino-acid chain: UPF0283 membrane protein Smed_1530 (361 aa).

The tract at residues 1 to 40 (MNDDSNGRRRRPAAFPVGTEDATSRELEQTPRRAPGSFSD) is disordered. The segment covering 22–31 (ATSRELEQTP) has biased composition (basic and acidic residues). 2 helical membrane passes run 76–96 (FGKI…GLWV) and 109–129 (WLGY…LIVV).

The protein belongs to the UPF0283 family.

The protein localises to the cell inner membrane. In Sinorhizobium medicae (strain WSM419) (Ensifer medicae), this protein is UPF0283 membrane protein Smed_1530.